A 374-amino-acid polypeptide reads, in one-letter code: Serine/threonine-protein kinase-transforming protein mos (374 aa).

The Protein kinase domain occupies 94-370; sequence VCLMHRLGSG…LLQRDLKAFR (277 aa). ATP-binding positions include 100-108 and Lys121; that span reads LGSGGFGSV. The Proton acceptor role is filled by Asp229.

Belongs to the protein kinase superfamily. Ser/Thr protein kinase family.

It catalyses the reaction L-seryl-[protein] + ATP = O-phospho-L-seryl-[protein] + ADP + H(+). The catalysed reaction is L-threonyl-[protein] + ATP = O-phospho-L-threonyl-[protein] + ADP + H(+). In Mus musculus (Mouse), this protein is Serine/threonine-protein kinase-transforming protein mos (V-MOS).